The following is a 3411-amino-acid chain: Genome polyprotein (3411 aa).

The Cytoplasmic portion of the chain corresponds to Met1 to Asp104. The segment at Pro38–Leu72 is hydrophobic; homodimerization of capsid protein C. The propeptide at Ser102 to Gly121 is ER anchor for the capsid protein C, removed in mature form by serine protease NS3. A helical membrane pass occupies residues Val105–Met125. The Extracellular portion of the chain corresponds to Arg126–Arg244. Asn134 and Asn150 each carry an N-linked (GlcNAc...) asparagine; by host glycan. Residues Trp245–Ser265 form a helical membrane-spanning segment. Residues Asn266–Arg270 are Cytoplasmic-facing. The helical transmembrane segment at Val271–Ser285 threads the bilayer. Residues Ala286 to Leu730 are Extracellular-facing. Disulfide bonds link Cys288–Cys315, Cys345–Cys401, Cys345–Cys406, Cys359–Cys390, Cys377–Cys401, Cys377–Cys406, Cys467–Cys568, and Cys585–Cys615. Residues Asp383–Gly396 form a fusion peptide region. Residues Phe731–Phe751 traverse the membrane as a helical segment. Topologically, residues Asn752–Thr757 are cytoplasmic. A helical membrane pass occupies residues Met758–Ala778. Topologically, residues Asp779–Glu1132 are extracellular. Intrachain disulfides connect Cys782-Cys793, Cys833-Cys921, Cys957-Cys1002, Cys1058-Cys1107, Cys1069-Cys1091, and Cys1090-Cys1094. 2 N-linked (GlcNAc...) asparagine; by host glycosylation sites follow: Asn908 and Asn986. Residues Ile1133–Lys1153 traverse the membrane as a helical segment. Topologically, residues Arg1154–Ala1201 are cytoplasmic. Residues Met1202 to Leu1222 traverse the membrane as a helical segment. The Lumenal segment spans residues Arg1223–Pro1287. The helical transmembrane segment at Val1288–Val1308 threads the bilayer. Residues Leu1309–Ser1355 lie on the Cytoplasmic side of the membrane. A helical transmembrane segment spans residues Ile1356–Phe1376. The Lumenal segment spans residues Gln1377–Glu1378. Residues Met1379–Ala1399 form a helical membrane-spanning segment. Topologically, residues Gly1400–Leu1456 are cytoplasmic. The tract at residues Leu1407–Val1446 is interacts with and activates NS3 protease. Positions Ala1457–Phe1477 form an intramembrane region, helical. The Cytoplasmic portion of the chain corresponds to His1478 to Ala2157. In terms of domain architecture, Peptidase S7 spans Ser1485 to Leu1665. Catalysis depends on charge relay system; for serine protease NS3 activity residues His1537, Asp1561, and Ser1622. Positions Pro1669–Gln1825 constitute a Helicase ATP-binding domain. The important for RNA-binding stretch occupies residues Lys1673–Lys1676. ATP is bound at residue Phe1682–Thr1689. The short motif at Asp1773–His1776 is the DEAH box element. In terms of domain architecture, Helicase C-terminal spans Glu1820–Tyr1997. Lys1877 bears the N6-acetyllysine; by host mark. The disordered stretch occupies residues Ala1942–Tyr1961. A helical transmembrane segment spans residues Met2158–Phe2178. At Met2179 to Arg2186 the chain is on the lumenal side. The helical intramembrane region spans Met2187–Glu2207. At Pro2208–Thr2209 the chain is on the lumenal side. Residues His2210–Gly2230 traverse the membrane as a helical segment. Over Gln2231–Ala2241 the chain is Cytoplasmic. A helical membrane pass occupies residues Phe2242 to Ala2256. Over Asn2257–Gly2293 the chain is Lumenal. Positions Ala2294–Ile2314 form an intramembrane region, helical. Topologically, residues Lys2315 to Ile2360 are lumenal. A helical membrane pass occupies residues Thr2361–Leu2380. At Pro2381–Ala2421 the chain is on the cytoplasmic side. A helical membrane pass occupies residues Leu2422–Met2442. At Cys2443–Thr2445 the chain is on the lumenal side. Residues Pro2446–Gly2466 form a helical membrane-spanning segment. The Cytoplasmic segment spans residues Asn2467–Ile3411. The region spanning Gly2507–Ser2771 is the mRNA cap 0-1 NS5-type MT domain. S-adenosyl-L-methionine is bound at residue Ser2562. The residue at position 2562 (Ser2562) is a Phosphoserine. Lys2567 acts as the For 2'-O-MTase activity in catalysis. S-adenosyl-L-methionine is bound by residues Gly2592, Trp2593, Thr2610, Leu2611, Asp2637, and Val2638. Residue Asp2652 is the For 2'-O-MTase activity of the active site. Position 2653 (Ile2653) interacts with S-adenosyl-L-methionine. Residues Lys2688 and Glu2724 each act as for 2'-O-MTase activity in the active site. Position 2726 (Tyr2726) interacts with S-adenosyl-L-methionine. Positions Arg2878 to Arg2911 match the Nuclear localization signal motif. Residues Glu2945, His2949, Cys2954, and Cys2957 each contribute to the Zn(2+) site. The RdRp catalytic domain occupies Gly3035 to Ala3187. The Zn(2+) site is built by His3222, Cys3238, and Cys3357.

The protein in the N-terminal section; belongs to the class I-like SAM-binding methyltransferase superfamily. mRNA cap 0-1 NS5-type methyltransferase family. In terms of assembly, homodimer. Interacts (via N-terminus) with host EXOC1 (via C-terminus); this interaction results in EXOC1 degradation through the proteasome degradation pathway. Forms heterodimers with envelope protein E in the endoplasmic reticulum and Golgi. As to quaternary structure, homodimer; in the endoplasmic reticulum and Golgi. Interacts with protein prM. Interacts with non-structural protein 1. In terms of assembly, homodimer; Homohexamer when secreted. Interacts with envelope protein E. Interacts (via N-terminus) with serine protease NS3. As to quaternary structure, forms a heterodimer with serine protease NS3. May form homooligomers. In terms of assembly, forms a heterodimer with NS2B. Interacts with non-structural protein 2A (via N-terminus). Interacts with NS4B. Interacts with unphosphorylated RNA-directed RNA polymerase NS5; this interaction stimulates RNA-directed RNA polymerase NS5 guanylyltransferase activity. NS3 interacts with host PDCD6IP; this interaction contributes to virion release. Interacts with serine protease NS3. As to quaternary structure, homodimer. Interacts with host STAT2; this interaction prevents the establishment of cellular antiviral state. Interacts with serine protease NS3. Interacts with host TRIM23; this interaction leads to NS5 ubiquitination. In terms of processing, specific enzymatic cleavages in vivo yield mature proteins. The nascent capsid protein C contains a C-terminal hydrophobic domain that act as a signal sequence for translocation of prM into the lumen of the ER. Mature capsid protein C is cleaved at a site upstream of this hydrophobic domain by NS3. prM is cleaved in post-Golgi vesicles by a host furin, releasing the mature small envelope protein M, and peptide pr. Non-structural protein 2A-alpha, a C-terminally truncated form of non-structural protein 2A, results from partial cleavage by NS3. Specific enzymatic cleavages in vivo yield mature proteins peptide 2K acts as a signal sequence and is removed from the N-terminus of NS4B by the host signal peptidase in the ER lumen. Signal cleavage at the 2K-4B site requires a prior NS3 protease-mediated cleavage at the 4A-2K site. Post-translationally, cleaved in post-Golgi vesicles by a host furin, releasing the mature small envelope protein M, and peptide pr. This cleavage is incomplete as up to 30% of viral particles still carry uncleaved prM. N-glycosylated. In terms of processing, N-glycosylated. The excreted form is glycosylated and this is required for efficient secretion of the protein from infected cells. Post-translationally, polyubiquitinated; ubiquitination is probably mediated by host TRIM23 and is prerequisite for NS5-STAT2 interaction. NS5 is not ISGylated or sumoylated. Acetylated by host KAT5. Acetylation modulates NS3 RNA-binding and unwinding activities and plays an important positive role for viral replication. In terms of processing, phosphorylated on serines residues. This phosphorylation may trigger NS5 nuclear localization.

It is found in the virion. Its subcellular location is the host nucleus. The protein resides in the host cytoplasm. The protein localises to the host perinuclear region. It localises to the secreted. It is found in the virion membrane. Its subcellular location is the host endoplasmic reticulum membrane. The catalysed reaction is Selective hydrolysis of -Xaa-Xaa-|-Yaa- bonds in which each of the Xaa can be either Arg or Lys and Yaa can be either Ser or Ala.. The enzyme catalyses RNA(n) + a ribonucleoside 5'-triphosphate = RNA(n+1) + diphosphate. It carries out the reaction a ribonucleoside 5'-triphosphate + H2O = a ribonucleoside 5'-diphosphate + phosphate + H(+). It catalyses the reaction ATP + H2O = ADP + phosphate + H(+). The catalysed reaction is a 5'-end (5'-triphosphoguanosine)-ribonucleoside in mRNA + S-adenosyl-L-methionine = a 5'-end (N(7)-methyl 5'-triphosphoguanosine)-ribonucleoside in mRNA + S-adenosyl-L-homocysteine. The enzyme catalyses a 5'-end (N(7)-methyl 5'-triphosphoguanosine)-ribonucleoside in mRNA + S-adenosyl-L-methionine = a 5'-end (N(7)-methyl 5'-triphosphoguanosine)-(2'-O-methyl-ribonucleoside) in mRNA + S-adenosyl-L-homocysteine + H(+). Functionally, plays a role in virus budding by binding to the cell membrane and gathering the viral RNA into a nucleocapsid that forms the core of a mature virus particle. During virus entry, may induce genome penetration into the host cytoplasm after hemifusion induced by the surface proteins. Can migrate to the cell nucleus where it modulates host functions. Inhibits RNA silencing by interfering with host Dicer. Its function is as follows. Prevents premature fusion activity of envelope proteins in trans-Golgi by binding to envelope protein E at pH6.0. After virion release in extracellular space, gets dissociated from E dimers. In terms of biological role, acts as a chaperone for envelope protein E during intracellular virion assembly by masking and inactivating envelope protein E fusion peptide. prM is the only viral peptide matured by host furin in the trans-Golgi network probably to avoid catastrophic activation of the viral fusion activity in acidic Golgi compartment prior to virion release. prM-E cleavage is inefficient, and many virions are only partially matured. These uncleaved prM would play a role in immune evasion. Functionally, may play a role in virus budding. Exerts cytotoxic effects by activating a mitochondrial apoptotic pathway through M ectodomain. May display a viroporin activity. Binds to host cell surface receptor and mediates fusion between viral and cellular membranes. Envelope protein is synthesized in the endoplasmic reticulum in the form of heterodimer with protein prM. They play a role in virion budding in the ER, and the newly formed immature particle is covered with 60 spikes composed of heterodimer between precursor prM and envelope protein E. The virion is transported to the Golgi apparatus where the low pH causes dissociation of PrM-E heterodimers and formation of E homodimers. prM-E cleavage is inefficient, and many virions are only partially matured. These uncleaved prM would play a role in immune evasion. Its function is as follows. Involved in immune evasion, pathogenesis and viral replication. Once cleaved off the polyprotein, is targeted to three destinations: the viral replication cycle, the plasma membrane and the extracellular compartment. Essential for viral replication. Required for formation of the replication complex and recruitment of other non-structural proteins to the ER-derived membrane structures. Excreted as a hexameric lipoparticle that plays a role against host immune response. Antagonizing the complement function. Binds to the host macrophages and dendritic cells. Inhibits signal transduction originating from Toll-like receptor 3 (TLR3). In terms of biological role, component of the viral RNA replication complex that functions in virion assembly and antagonizes the host immune response. Functionally, required cofactor for the serine protease function of NS3. May have membrane-destabilizing activity and form viroporins. Displays three enzymatic activities: serine protease, NTPase and RNA helicase. NS3 serine protease, in association with NS2B, performs its autocleavage and cleaves the polyprotein at dibasic sites in the cytoplasm: C-prM, NS2A-NS2B, NS2B-NS3, NS3-NS4A, NS4A-2K and NS4B-NS5. NS3 RNA helicase binds RNA and unwinds dsRNA in the 3' to 5' direction. Also plays a role in virus assembly. Its function is as follows. Regulates the ATPase activity of the NS3 helicase activity. NS4A allows NS3 helicase to conserve energy during unwinding. In terms of biological role, functions as a signal peptide for NS4B and is required for the interferon antagonism activity of the latter. Functionally, induces the formation of ER-derived membrane vesicles where the viral replication takes place. Inhibits interferon (IFN)-induced host STAT1 phosphorylation and nuclear translocation, thereby preventing the establishment of cellular antiviral state by blocking the IFN-alpha/beta pathway. Replicates the viral (+) and (-) RNA genome, and performs the capping of genomes in the cytoplasm. NS5 methylates viral RNA cap at guanine N-7 and ribose 2'-O positions. Besides its role in RNA genome replication, also prevents the establishment of cellular antiviral state by blocking the interferon-alpha/beta (IFN-alpha/beta) signaling pathway. IFN-I induces binding of NS5 to host IFN-activated transcription factor STAT2, preventing its transcriptional activity. Host TRIM23 is the E3 ligase that interacts with and polyubiquitinates NS5 to promote its binding to STAT2 and trigger IFN-I signaling inhibition. The chain is Genome polyprotein from Aedes aegypti (Yellowfever mosquito).